The chain runs to 231 residues: Beta-casein (231 aa).

The signal sequence occupies residues 1–15; it reads MKVFILACLVALALA. Serine 24 bears the Phosphoserine mark. Position 27 is a phosphothreonine (threonine 27). A phosphoserine mark is found at serine 29, serine 31, and serine 32.

The protein belongs to the beta-casein family. Mammary gland specific. Secreted in milk.

The protein resides in the secreted. Important role in determination of the surface properties of the casein micelles. The polypeptide is Beta-casein (Csn2) (Rattus norvegicus (Rat)).